Here is a 181-residue protein sequence, read N- to C-terminus: Trypsin inhibitor B (181 aa).

Cystine bridges form between Cys39/Cys86 and Cys136/Cys145.

It belongs to the protease inhibitor I3 (leguminous Kunitz-type inhibitor) family.

Inhibition of trypsin. The polypeptide is Trypsin inhibitor B (Glycine max (Soybean)).